Reading from the N-terminus, the 2207-residue chain is Desmoplakin-B (2207 aa).

3 coiled-coil regions span residues 506-916 (MEEL…EAGK), 952-1000 (AKHA…EQGR), and 1029-1063 (TERL…LLKN). Residues 905-924 (KQRQVAEEEAGKRRRTESQL) are compositionally biased toward basic and acidic residues. The segment at 905–933 (KQRQVAEEEAGKRRRTESQLEKSSQAMRE) is disordered. Plectin repeat units lie at residues 1369–1406 (LLEA…DKKQ), 1407–1445 (LLIA…TLRL), 1446–1483 (LQAQ…YQAL), 1571–1609 (YLRG…TLEL), 1610–1647 (LEAQ…KDKL), 1685–1723 (LLEA…NQIL), 1783–1811 (IVDP…FLEL), 1992–2029 (LLEA…MANR), and 2068–2106 (FLEF…AQRL). Positions 2155 to 2164 (ISSPYNLSNP) are enriched in polar residues. The segment at 2155 to 2207 (ISSPYNLSNPGSASGSRSGSRRGSVDYSLSPSSSSRYSSFSYSRTSFSSRSLS) is disordered. A compositionally biased stretch (low complexity) spans 2165–2207 (GSASGSRSGSRRGSVDYSLSPSSSSRYSSFSYSRTSFSSRSLS).

The protein belongs to the plakin or cytolinker family.

Its subcellular location is the cell junction. The protein localises to the desmosome. It is found in the cell membrane. Functionally, involved in the organization of desmosome cell-cell junctions. Of particular importance in cell adhesion in the skin and during cardiac development. May also play a role in the regulation of Wnt, TGF-beta and Hippo signaling pathways. This chain is Desmoplakin-B, found in Danio rerio (Zebrafish).